The primary structure comprises 548 residues: Membrane protein insertase YidC (548 aa).

A helical membrane pass occupies residues 6–26 (NLLVIALLFVSFMIWQAWEQD). Residues 28 to 56 (NPQPQTQQTTQTTTTAAGSAADQGVPASG) are disordered. Low complexity predominate over residues 29-42 (PQPQTQQTTQTTTT). 4 helical membrane-spanning segments follow: residues 350 to 370 (FVGN…GIMY), 424 to 444 (FPLI…MGSI), 458 to 478 (LSAQ…MFFI), and 499 to 519 (PVIF…YYIV).

Belongs to the OXA1/ALB3/YidC family. Type 1 subfamily. Interacts with the Sec translocase complex via SecD. Specifically interacts with transmembrane segments of nascent integral membrane proteins during membrane integration.

Its subcellular location is the cell inner membrane. Required for the insertion and/or proper folding and/or complex formation of integral membrane proteins into the membrane. Involved in integration of membrane proteins that insert both dependently and independently of the Sec translocase complex, as well as at least some lipoproteins. Aids folding of multispanning membrane proteins. The sequence is that of Membrane protein insertase YidC from Salmonella paratyphi C (strain RKS4594).